Reading from the N-terminus, the 395-residue chain is MKQIEGGICAVRGVSAYGIKPGKMGIAVIRAEGPAAGVFTRNKVVAAPVTLSRERIETEHRLSAVIANSGNANAFTGDDGFLDAMEMASMVAENLGLDPDNVAVASTGVIGRRLDVSFIKEHLPEVLEGLGSSPECSRAAAKAIMTTDRALKESAVELDCGVRIGAIAKGSGMIEPNMGTMLCFAYTDAKVPADVLDAALKIAVDKTFNMVVVDGDTSTNDMVLFTSTCKSGVKPCLDCLDDFEEGLVCVFTDLAKKMAKDGEGATKLIEARVTGAKKYEDARLVAKTIVRSPLVKSAIFGKDPNWGRVVAAAGYSGAELEQERLTLSFSGGGEEVELVKAGEISTASDLSLLKKIMANDEIIINLDLAMGEESATAWGCDLTYDYVRINAEYTT.

Residues Thr146, Lys169, Thr180, Glu263, Asn390, and Thr395 each coordinate substrate. Thr180 (nucleophile) is an active-site residue.

The protein belongs to the ArgJ family. As to quaternary structure, heterotetramer of two alpha and two beta chains.

The protein resides in the cytoplasm. It carries out the reaction N(2)-acetyl-L-ornithine + L-glutamate = N-acetyl-L-glutamate + L-ornithine. It participates in amino-acid biosynthesis; L-arginine biosynthesis; L-ornithine and N-acetyl-L-glutamate from L-glutamate and N(2)-acetyl-L-ornithine (cyclic): step 1/1. Its function is as follows. Catalyzes the transfer of the acetyl group from N(2)-acetylornithine to glutamate, forming N-acetylglutamate and L-ornithine. In Methanosarcina mazei (strain ATCC BAA-159 / DSM 3647 / Goe1 / Go1 / JCM 11833 / OCM 88) (Methanosarcina frisia), this protein is Glutamate N-acetyltransferase.